We begin with the raw amino-acid sequence, 29 residues long: Brevinin-2Ee (29 aa).

A disulfide bridge connects residues C23 and C29.

It belongs to the frog skin active peptide (FSAP) family. Brevinin subfamily. As to expression, expressed by the skin glands.

It localises to the secreted. In terms of biological role, shows antibacterial activity against representative Gram-negative and Gram-positive bacterial species, and hemolytic activity. This Pelophylax lessonae (Pool frog) protein is Brevinin-2Ee.